The following is a 914-amino-acid chain: Valine--tRNA ligase (914 aa).

A 'HIGH' region motif is present at residues 45–55 (PNVTGSLHMGH). Positions 538 to 542 (KMSKS) match the 'KMSKS' region motif. An ATP-binding site is contributed by lysine 541. Positions 847–914 (LVDLDALKGR…LARKRLADLS (68 aa)) form a coiled coil.

The protein belongs to the class-I aminoacyl-tRNA synthetase family. ValS type 1 subfamily. Monomer.

Its subcellular location is the cytoplasm. The catalysed reaction is tRNA(Val) + L-valine + ATP = L-valyl-tRNA(Val) + AMP + diphosphate. In terms of biological role, catalyzes the attachment of valine to tRNA(Val). As ValRS can inadvertently accommodate and process structurally similar amino acids such as threonine, to avoid such errors, it has a 'posttransfer' editing activity that hydrolyzes mischarged Thr-tRNA(Val) in a tRNA-dependent manner. This is Valine--tRNA ligase from Parasynechococcus marenigrum (strain WH8102).